Consider the following 249-residue polypeptide: Beta-crystallin B1 (249 aa).

The segment at 1-49 is disordered; the sequence is MSQPAVKASATAAVNPGPDGKGKGAPPPGPAPGSGPAQAPAQPMPAAKG. Residue Ser-2 is modified to N-acetylserine. The tract at residues 2-55 is N-terminal arm; it reads SQPAVKASATAAVNPGPDGKGKGAPPPGPAPGSGPAQAPAQPMPAAKGDLPPGS. Over residues 34 to 49 the composition is skewed to low complexity; it reads SGPAQAPAQPMPAAKG. Beta/gamma crystallin 'Greek key' domains lie at 56-95 and 96-140; these read YKLV…IVTS and GPWV…RPIR. The segment at 141–145 is connecting peptide; the sequence is MDAQE. Beta/gamma crystallin 'Greek key' domains follow at residues 146–187 and 188–230; these read HKLC…RVSS and GTWV…RRLR. The C-terminal arm stretch occupies residues 232–249; that stretch reads RQWHREGCFPVLAAEPPK.

Belongs to the beta/gamma-crystallin family. As to quaternary structure, homo/heterodimer, or complexes of higher-order. The structure of beta-crystallin oligomers seems to be stabilized through interactions between the N-terminal arms. Post-translationally, specific cleavages in the N-terminal arm occur during lens maturation and give rise to truncated forms, leading to impaired oligomerization and protein insolubilization.

Crystallins are the dominant structural components of the vertebrate eye lens. The protein is Beta-crystallin B1 (CRYBB1) of Sus scrofa (Pig).